The following is a 175-amino-acid chain: Ribosome maturation factor RimM (175 aa).

The PRC barrel domain occupies 98-172 (DGEFHVRDLQ…WLLITPPKGL (75 aa)).

It belongs to the RimM family. Binds ribosomal protein uS19.

The protein resides in the cytoplasm. Functionally, an accessory protein needed during the final step in the assembly of 30S ribosomal subunit, possibly for assembly of the head region. Essential for efficient processing of 16S rRNA. May be needed both before and after RbfA during the maturation of 16S rRNA. It has affinity for free ribosomal 30S subunits but not for 70S ribosomes. The sequence is that of Ribosome maturation factor RimM from Synechococcus sp. (strain RCC307).